Reading from the N-terminus, the 290-residue chain is 33 kDa chaperonin (290 aa).

2 disulfide bridges follow: Cys-235–Cys-237 and Cys-268–Cys-271.

The protein belongs to the HSP33 family. In terms of processing, under oxidizing conditions two disulfide bonds are formed involving the reactive cysteines. Under reducing conditions zinc is bound to the reactive cysteines and the protein is inactive.

Its subcellular location is the cytoplasm. Redox regulated molecular chaperone. Protects both thermally unfolding and oxidatively damaged proteins from irreversible aggregation. Plays an important role in the bacterial defense system toward oxidative stress. The polypeptide is 33 kDa chaperonin (Streptococcus sanguinis (strain SK36)).